Consider the following 425-residue polypeptide: Kynureninase (425 aa).

Residues Leu105, Thr106, 133-136 (FPSD), Asp218, His221, and Tyr243 each bind pyridoxal 5'-phosphate. Position 244 is an N6-(pyridoxal phosphate)lysine (Lys244). Trp274 and Asn302 together coordinate pyridoxal 5'-phosphate.

Belongs to the kynureninase family. Homodimer. Pyridoxal 5'-phosphate is required as a cofactor.

The enzyme catalyses L-kynurenine + H2O = anthranilate + L-alanine + H(+). It catalyses the reaction 3-hydroxy-L-kynurenine + H2O = 3-hydroxyanthranilate + L-alanine + H(+). The protein operates within amino-acid degradation; L-kynurenine degradation; L-alanine and anthranilate from L-kynurenine: step 1/1. It participates in cofactor biosynthesis; NAD(+) biosynthesis; quinolinate from L-kynurenine: step 2/3. Catalyzes the cleavage of L-kynurenine (L-Kyn) and L-3-hydroxykynurenine (L-3OHKyn) into anthranilic acid (AA) and 3-hydroxyanthranilic acid (3-OHAA), respectively. The chain is Kynureninase from Flavobacterium psychrophilum (strain ATCC 49511 / DSM 21280 / CIP 103535 / JIP02/86).